The following is a 142-amino-acid chain: Large ribosomal subunit protein bL17 (142 aa).

This sequence belongs to the bacterial ribosomal protein bL17 family. In terms of assembly, part of the 50S ribosomal subunit. Contacts protein L32.

The protein is Large ribosomal subunit protein bL17 of Chlamydia caviae (strain ATCC VR-813 / DSM 19441 / 03DC25 / GPIC) (Chlamydophila caviae).